Consider the following 148-residue polypeptide: UPF0756 membrane protein YeaL (148 aa).

Helical transmembrane passes span 14–34 (ALGF…LIIV), 51–71 (LTVG…SGTL), 86–106 (LVAI…VALM), and 121–141 (VLGV…AGLV).

This sequence belongs to the UPF0756 family.

It localises to the cell membrane. The chain is UPF0756 membrane protein YeaL from Salmonella arizonae (strain ATCC BAA-731 / CDC346-86 / RSK2980).